Here is a 282-residue protein sequence, read N- to C-terminus: ATP synthase gamma chain (282 aa).

The protein belongs to the ATPase gamma chain family. In terms of assembly, F-type ATPases have 2 components, CF(1) - the catalytic core - and CF(0) - the membrane proton channel. CF(1) has five subunits: alpha(3), beta(3), gamma(1), delta(1), epsilon(1). CF(0) has three main subunits: a, b and c.

Its subcellular location is the cell membrane. Its function is as follows. Produces ATP from ADP in the presence of a proton gradient across the membrane. The gamma chain is believed to be important in regulating ATPase activity and the flow of protons through the CF(0) complex. In Clostridium acetobutylicum (strain ATCC 824 / DSM 792 / JCM 1419 / IAM 19013 / LMG 5710 / NBRC 13948 / NRRL B-527 / VKM B-1787 / 2291 / W), this protein is ATP synthase gamma chain.